A 119-amino-acid polypeptide reads, in one-letter code: Small ribosomal subunit protein bS6 (119 aa).

Residues 95–119 form a disordered region; sequence AVTEPSPLAKGNEKREDRKESEDAE. Positions 105-119 are enriched in basic and acidic residues; it reads GNEKREDRKESEDAE.

The protein belongs to the bacterial ribosomal protein bS6 family.

Binds together with bS18 to 16S ribosomal RNA. In Halorhodospira halophila (strain DSM 244 / SL1) (Ectothiorhodospira halophila (strain DSM 244 / SL1)), this protein is Small ribosomal subunit protein bS6.